Reading from the N-terminus, the 477-residue chain is Transmembrane and coiled-coil domain protein 3 (477 aa).

Residues 1 to 24 (MPGSDTALTVDRTYSDPGRHHRCK) form a disordered region. The residue at position 46 (S46) is a Phosphoserine. Coiled coils occupy residues 63 to 83 (KVKL…EQIK) and 112 to 149 (KQVF…NGVT). Residues 234-280 (ASPRAYGGSATIVNKPKYGSDDECSSGTSGSADSNGNQSFGAGGTST) form a disordered region. At S253 the chain carries Phosphoserine. Residues 258-280 (SSGTSGSADSNGNQSFGAGGTST) show a composition bias toward polar residues. Residues 284 to 398 (QGKIAKIMEE…KLELHQQEQQ (115 aa)) adopt a coiled-coil conformation. 2 helical membrane passes run 409–429 (VLLG…LVCV) and 450–470 (FFAV…LCAI).

The protein belongs to the TEX28 family. In terms of assembly, may form homodimers and heterodimers with TMCC2 or TMCC3 via the coiled-coil domains. Interacts with ribosomal proteins RPL4 and RPS6.

Its subcellular location is the endoplasmic reticulum membrane. This is Transmembrane and coiled-coil domain protein 3 from Mus musculus (Mouse).